The sequence spans 320 residues: FHA domain-containing protein FHA2 (320 aa).

Ala2 carries the N-acetylalanine modification. One can recognise an FHA domain in the interval 32-89 (IILGRNSKKATVDVDLSSLGGGMNISRNHARIFYDFTRRRFSLEVLGKNGCLVEGVLH). The disordered stretch occupies residues 138-211 (VPYHNYQSGP…REGRSKVDRE (74 aa)). Positions 163–178 (EYDDEDDDDDDDEEDD) are enriched in acidic residues. Basic and acidic residues predominate over residues 198 to 210 (GEKKREGRSKVDR).

In terms of tissue distribution, widely expressed.

It is found in the nucleus. In terms of biological role, may play a role in the control of plant organ development and specifically in the regulation of stamen development. Does not show transactivation activity in yeast. This Arabidopsis thaliana (Mouse-ear cress) protein is FHA domain-containing protein FHA2.